The chain runs to 343 residues: Cytoplasmic tRNA 2-thiolation protein 1 (343 aa).

Belongs to the TtcA family. CTU1/NCS6/ATPBD3 subfamily.

It localises to the cytoplasm. The protein operates within tRNA modification; 5-methoxycarbonylmethyl-2-thiouridine-tRNA biosynthesis. In terms of biological role, plays a central role in 2-thiolation of mcm(5)S(2)U at tRNA wobble positions of tRNA(Lys), tRNA(Glu) and tRNA(Gln). Directly binds tRNAs and probably acts by catalyzing adenylation of tRNAs, an intermediate required for 2-thiolation. It is unclear whether it acts as a sulfurtransferase that transfers sulfur from thiocarboxylated URM1 onto the uridine of tRNAs at wobble position. The protein is Cytoplasmic tRNA 2-thiolation protein 1 of Drosophila melanogaster (Fruit fly).